A 304-amino-acid chain; its full sequence is UDP-3-O-acyl-N-acetylglucosamine deacetylase (304 aa).

Zn(2+) contacts are provided by His78, His237, and Asp241. His264 (proton donor) is an active-site residue.

The protein belongs to the LpxC family. It depends on Zn(2+) as a cofactor.

The catalysed reaction is a UDP-3-O-[(3R)-3-hydroxyacyl]-N-acetyl-alpha-D-glucosamine + H2O = a UDP-3-O-[(3R)-3-hydroxyacyl]-alpha-D-glucosamine + acetate. The protein operates within glycolipid biosynthesis; lipid IV(A) biosynthesis; lipid IV(A) from (3R)-3-hydroxytetradecanoyl-[acyl-carrier-protein] and UDP-N-acetyl-alpha-D-glucosamine: step 2/6. Functionally, catalyzes the hydrolysis of UDP-3-O-myristoyl-N-acetylglucosamine to form UDP-3-O-myristoylglucosamine and acetate, the committed step in lipid A biosynthesis. The protein is UDP-3-O-acyl-N-acetylglucosamine deacetylase of Polynucleobacter asymbioticus (strain DSM 18221 / CIP 109841 / QLW-P1DMWA-1) (Polynucleobacter necessarius subsp. asymbioticus).